Here is a 465-residue protein sequence, read N- to C-terminus: Cyclin-A1 (465 aa).

It belongs to the cyclin family. Cyclin AB subfamily. Interacts with the CDK2 and the CDC2 protein kinases to form a serine/threonine kinase holoenzyme complex. The cyclin subunit imparts substrate specificity to the complex. Does not bind CDK4 and CDK5 (in vitro). The cyclin A1-CDK2 complex interacts with transcription factor E2F-1 and RB proteins. Found in a complex with CDK2, CABLES1 and CCNE1. Interacts with INCA1. Interacts with KLHDC9. Post-translationally, polyubiquitinated via 'Lys-11'-linked ubiquitin by the anaphase-promoting complex (APC/C), leading to its degradation by the proteasome. Deubiquitinated and stabilized by USP37 enables entry into S phase. Ubiquitinated during the G1 phase by the SCF(FBXO31) complex, leading to its proteasomal degradation. Very high levels in testis and very low levels in brain. Also found in myeloid leukemia cell lines.

The protein resides in the nucleus. May be involved in the control of the cell cycle at the G1/S (start) and G2/M (mitosis) transitions. May primarily function in the control of the germline meiotic cell cycle and additionally in the control of mitotic cell cycle in some somatic cells. The protein is Cyclin-A1 (CCNA1) of Homo sapiens (Human).